A 448-amino-acid polypeptide reads, in one-letter code: Ribosome biogenesis protein YTM1 (448 aa).

The segment at 5–86 (TSNQAVVFST…EETLEIEYIE (82 aa)) is ubiquitin-like (UBL) domain. 6 WD repeats span residues 98 to 136 (PHESWVSAVSCSLPTHFLTTAYDGHLRAFDLSKNVTLDA), 191 to 230 (LHTAPVSSIAANPSGTQLLTSSWDSLIGVWDTTIPPKHEV), 271 to 309 (SHIGRVSKVAWLSPTQGVSCGFDSTLRTWDVERGLCTRT), 312 to 351 (ASEKPFLDLAVNVENQTALTVSTDRTMTLYDLRTEEALSA), 357 to 397 (LHPA…AAIS), and 403 to 439 (DGTKKVLAVDWKRGVIGIGGEGGLDVWKVGLENETQG). Residues 225–261 (PPKHEVPEPTITAADQRTKKRRKVDPSSGDSSSPTAI) are disordered.

It belongs to the WD repeat WDR12/YTM1 family. As to quaternary structure, component of the NOP7 complex, composed of ERB1, NOP7 and YTM1. The complex is held together by ERB1, which interacts with NOP7 via its N-terminal domain and with YTM1 via a high-affinity interaction between the seven-bladed beta-propeller domains of the 2 proteins. The NOP7 complex associates with the 66S pre-ribosome. Interacts (via UBL domain) with MDN1 (via VWFA/MIDAS domain).

It localises to the nucleus. The protein localises to the nucleolus. It is found in the nucleoplasm. Its function is as follows. Component of the NOP7 complex, which is required for maturation of the 25S and 5.8S ribosomal RNAs and formation of the 60S ribosome. In Coprinopsis cinerea (strain Okayama-7 / 130 / ATCC MYA-4618 / FGSC 9003) (Inky cap fungus), this protein is Ribosome biogenesis protein YTM1.